We begin with the raw amino-acid sequence, 194 residues long: Ras-related protein Rab-22A (194 aa).

GTP is bound at residue 12 to 20 (GDTGVGKSS). Positions 34 to 42 (INPTIGASF) match the Effector region motif. GTP-binding positions include 60 to 64 (DTAGQ), 118 to 121 (NKCD), and 148 to 150 (SAK). The segment at 170–194 (DANPASGGKGFKLRRQPSEPKRSCC) is disordered. The span at 185–194 (QPSEPKRSCC) shows a compositional bias: basic and acidic residues. 2 S-geranylgeranyl cysteine lipidation sites follow: cysteine 193 and cysteine 194.

Belongs to the small GTPase superfamily. Rab family. In terms of assembly, binds EEA1. Interacts (in its GTP-bound form) with RINL. Interacts directly with ZFYVE20. Interacts (in its GTP-bound form) with RABGEF1. Detected in brain and heart, and at lower levels in lung and spleen.

Its subcellular location is the endosome membrane. The protein localises to the cell membrane. It localises to the early endosome. The protein resides in the late endosome. It is found in the cell projection. Its subcellular location is the ruffle. The protein localises to the cytoplasmic vesicle. It localises to the phagosome. The protein resides in the phagosome membrane. Plays a role in endocytosis and intracellular protein transport. Mediates trafficking of TF from early endosomes to recycling endosomes. Required for NGF-mediated endocytosis of NTRK1, and subsequent neurite outgrowth. Binds GTP and GDP and has low GTPase activity. Alternates between a GTP-bound active form and a GDP-bound inactive form. The sequence is that of Ras-related protein Rab-22A (Rab22a) from Mus musculus (Mouse).